The primary structure comprises 538 residues: NAD(P)H-quinone oxidoreductase chain 4 (538 aa).

A run of 14 helical transmembrane segments spans residues 11 to 31, 43 to 63, 95 to 115, 119 to 139, 143 to 163, 175 to 195, 217 to 237, 251 to 271, 285 to 305, 314 to 334, 340 to 360, 382 to 404, 425 to 445, and 472 to 492; these read FPWLSLSILFPIVGALIVPFI, YALIISLITFLITVAAYFKGF, MPLILLTSFITSLAVLAAWPV, PKLFFFLILAMDGGQIAVFAV, LLFFLAWELELFPVYLFLAIW, FIIYTAGSSLFILLAGLAMGF, GFQLLCYSGLLIAFGVKLPIV, TAPVHMLLAGILLKMGGYALL, FAPLLIVLGVVNIIYAALTSF, IAYSSISHMGFVLIGIGSFSS, AMLQMVSHGLIGASLFFLVGA, IMFALWTACAFASLALPGMSGFI, IVVASLAAIGVILTPIYLLSM, and IYIIACLLVPIIGIGLYPKIM.

This sequence belongs to the complex I subunit 4 family.

It is found in the cellular thylakoid membrane. It carries out the reaction a plastoquinone + NADH + (n+1) H(+)(in) = a plastoquinol + NAD(+) + n H(+)(out). The catalysed reaction is a plastoquinone + NADPH + (n+1) H(+)(in) = a plastoquinol + NADP(+) + n H(+)(out). Its function is as follows. NDH-1 shuttles electrons from NAD(P)H, via FMN and iron-sulfur (Fe-S) centers, to quinones in the respiratory chain. The immediate electron acceptor for the enzyme in this species is believed to be plastoquinone. Couples the redox reaction to proton translocation (for every two electrons transferred, four hydrogen ions are translocated across the cytoplasmic membrane), and thus conserves the redox energy in a proton gradient. The polypeptide is NAD(P)H-quinone oxidoreductase chain 4 (Prochlorococcus marinus (strain NATL1A)).